The primary structure comprises 962 residues: UvrABC system protein A (962 aa).

Position 38 to 45 (38 to 45 (GISGSGKS)) interacts with ATP. ABC transporter domains lie at 319-597 (WSKS…PDSL) and 617-944 (PSGR…RFLR). An ATP-binding site is contributed by 649 to 656 (GVSGSGKS). The segment at 748-774 (CEACGGDGIIKIEMHFLADVYVPCEVC) adopts a C4-type zinc-finger fold.

It belongs to the ABC transporter superfamily. UvrA family. Forms a heterotetramer with UvrB during the search for lesions.

It is found in the cytoplasm. The UvrABC repair system catalyzes the recognition and processing of DNA lesions. UvrA is an ATPase and a DNA-binding protein. A damage recognition complex composed of 2 UvrA and 2 UvrB subunits scans DNA for abnormalities. When the presence of a lesion has been verified by UvrB, the UvrA molecules dissociate. The protein is UvrABC system protein A of Methanothermobacter thermautotrophicus (strain ATCC 29096 / DSM 1053 / JCM 10044 / NBRC 100330 / Delta H) (Methanobacterium thermoautotrophicum).